A 126-amino-acid chain; its full sequence is Cyclin-dependent kinase 2-associated protein 2 (126 aa).

Positions Met-1–Phe-48 are disordered. The span at Ala-9 to Pro-43 shows a compositional bias: low complexity. Residues Pro-64–Ile-106 are interaction with CDK2.

This sequence belongs to the CDK2AP family. As to quaternary structure, component of the nucleosome remodeling and deacetylase (NuRD) repressor complex, composed of core proteins MTA1, MTA2, MTA3, RBBP4, RBBP7, HDAC1, HDAC2, MBD2, MBD3, and peripherally associated proteins CDK2AP1, CDK2AP2, GATAD2A, GATAD2B, CHD3, CHD4 and CHD5. The exact stoichiometry of the NuRD complex is unknown, and some subunits such as MBD2 and MBD3, GATAD2A and GATAD2B, and CHD3, CHD4 and CHD5 define mutually exclusive NuRD complexes. Interacts with CDK2AP1. Interacts with CDK2. Interacts with MAPK1. In terms of processing, phosphorylated by MAPK1 and CDK2. Ubiquitous.

It localises to the cytoplasm. Its subcellular location is the nucleus. Acts as a component of the histone deacetylase NuRD complex which participates in the remodeling of chromatin. Inhibits cell cycle G1/S phase transition by repressing CDK2 expression and activation; represses CDK2 activation by inhibiting its interaction with cyclin E and A. Plays a role in regulating the self-renewal of embryonic stem cells (ESCs) and in maintaining cell survival during terminal differentiation of ESCs. Regulates microtubule organization of metaphase II oocytes. The sequence is that of Cyclin-dependent kinase 2-associated protein 2 (CDK2AP2) from Homo sapiens (Human).